We begin with the raw amino-acid sequence, 72 residues long: Heat-stable enterotoxin A2 (72 aa).

The signal sequence occupies residues 1–19 (MKKSILFIFLSVLSFSPFA). Positions 20-53 (QDAKPAGSSKEKITLESKKCNIVKKNNESSPESM) are excised as a propeptide. 3 disulfide bridges follow: Cys59–Cys64, Cys60–Cys68, and Cys63–Cys71.

It belongs to the heat-stable enterotoxin family.

It is found in the secreted. Its function is as follows. Toxin which activates the particulate form of guanylate cyclase and increases cyclic GMP levels within the host intestinal epithelial cells. This Escherichia coli protein is Heat-stable enterotoxin A2 (sta2).